We begin with the raw amino-acid sequence, 181 residues long: NAD(P)H-quinone oxidoreductase subunit I, chloroplastic (181 aa).

4Fe-4S ferredoxin-type domains lie at 52 to 81 (GRIH…VDWE) and 92 to 121 (KSYS…MTEE). The [4Fe-4S] cluster site is built by Cys-61, Cys-64, Cys-67, Cys-71, Cys-101, Cys-104, Cys-107, and Cys-111.

It belongs to the complex I 23 kDa subunit family. In terms of assembly, NDH is composed of at least 16 different subunits, 5 of which are encoded in the nucleus. [4Fe-4S] cluster is required as a cofactor.

The protein localises to the plastid. It is found in the chloroplast thylakoid membrane. It catalyses the reaction a plastoquinone + NADH + (n+1) H(+)(in) = a plastoquinol + NAD(+) + n H(+)(out). It carries out the reaction a plastoquinone + NADPH + (n+1) H(+)(in) = a plastoquinol + NADP(+) + n H(+)(out). Its function is as follows. NDH shuttles electrons from NAD(P)H:plastoquinone, via FMN and iron-sulfur (Fe-S) centers, to quinones in the photosynthetic chain and possibly in a chloroplast respiratory chain. The immediate electron acceptor for the enzyme in this species is believed to be plastoquinone. Couples the redox reaction to proton translocation, and thus conserves the redox energy in a proton gradient. This chain is NAD(P)H-quinone oxidoreductase subunit I, chloroplastic, found in Zygnema circumcarinatum (Green alga).